We begin with the raw amino-acid sequence, 316 residues long: Nod factor export ATP-binding protein I (316 aa).

The ABC transporter domain occupies 18 to 248 (IDFSDVSKTY…LIGCEVIEIY (231 aa)). Residue 50-57 (GPNGAGKS) participates in ATP binding.

The protein belongs to the ABC transporter superfamily. Lipooligosaccharide exporter (TC 3.A.1.102) family. The complex is composed of two ATP-binding proteins (NodI) and two transmembrane proteins (NodJ).

The protein localises to the cell inner membrane. Part of the ABC transporter complex NodIJ involved in the export of the nodulation factors (Nod factors), the bacterial signal molecules that induce symbiosis and subsequent nodulation induction. Nod factors are LCO (lipo-chitin oligosaccharide), a modified beta-1,4-linked N-acetylglucosamine oligosaccharide. This subunit is responsible for energy coupling to the transport system. In Rhizobium etli (strain ATCC 51251 / DSM 11541 / JCM 21823 / NBRC 15573 / CFN 42), this protein is Nod factor export ATP-binding protein I.